The following is a 673-amino-acid chain: DNA ligase (673 aa).

Residues aspartate 34–aspartate 38, serine 83–leucine 84, and glutamate 116 each bind NAD(+). The active-site N6-AMP-lysine intermediate is lysine 118. Residues arginine 139, glutamate 176, lysine 293, and lysine 317 each contribute to the NAD(+) site. Zn(2+) is bound by residues cysteine 411, cysteine 414, cysteine 429, and cysteine 435. The 79-residue stretch at asparagine 595–serine 673 folds into the BRCT domain.

The protein belongs to the NAD-dependent DNA ligase family. LigA subfamily. Mg(2+) is required as a cofactor. Requires Mn(2+) as cofactor.

The enzyme catalyses NAD(+) + (deoxyribonucleotide)n-3'-hydroxyl + 5'-phospho-(deoxyribonucleotide)m = (deoxyribonucleotide)n+m + AMP + beta-nicotinamide D-nucleotide.. In terms of biological role, DNA ligase that catalyzes the formation of phosphodiester linkages between 5'-phosphoryl and 3'-hydroxyl groups in double-stranded DNA using NAD as a coenzyme and as the energy source for the reaction. It is essential for DNA replication and repair of damaged DNA. The chain is DNA ligase from Legionella pneumophila subsp. pneumophila (strain Philadelphia 1 / ATCC 33152 / DSM 7513).